The following is a 280-amino-acid chain: Probable formate transporter (280 aa).

The next 6 membrane-spanning stretches (helical) occupy residues 33–49 (LSFVAGAYIAFGGLLAE), 67–83 (LVFGGVFPVGLMLVVIA), 116–133 (SWVFNLVGALFVAYVLAY), 177–195 (FWRAIGCNWLVCLAVYLAV), 204–219 (SFGIWFPIMAFVCIGF), and 253–272 (LGNIVGGAIFVGCIYWFTYL).

It belongs to the FNT transporter (TC 1.A.16) family.

The protein localises to the cell membrane. Its function is as follows. May act as a formate transporter. This chain is Probable formate transporter (fdhC), found in Methanobacterium formicicum.